The primary structure comprises 31 residues: Toxin BmKK16 (31 aa).

Gln1 is modified (pyrrolidone carboxylic acid). Intrachain disulfides connect Cys4–Cys20, Cys10–Cys25, and Cys14–Cys27. Pro31 is subject to Proline amide.

This sequence belongs to the short scorpion toxin superfamily. Potassium channel inhibitor family. Alpha-KTx 17 subfamily. The N-terminus is blocked. As to expression, expressed by the venom gland.

It localises to the secreted. In terms of biological role, blocker of potassium channels (Kv). This Olivierus martensii (Manchurian scorpion) protein is Toxin BmKK16.